The chain runs to 500 residues: Glycerol kinase (500 aa).

ADP is bound at residue Thr13. ATP contacts are provided by Thr13, Thr14, and Ser15. Residue Thr13 participates in sn-glycerol 3-phosphate binding. Position 17 (Arg17) interacts with ADP. The sn-glycerol 3-phosphate site is built by Arg83, Glu84, Tyr135, and Asp244. The glycerol site is built by Arg83, Glu84, Tyr135, Asp244, and Gln245. Residues Thr266 and Gly309 each contribute to the ADP site. The ATP site is built by Thr266, Gly309, Gln313, and Gly410. Positions 410 and 414 each coordinate ADP.

This sequence belongs to the FGGY kinase family.

It carries out the reaction glycerol + ATP = sn-glycerol 3-phosphate + ADP + H(+). The protein operates within polyol metabolism; glycerol degradation via glycerol kinase pathway; sn-glycerol 3-phosphate from glycerol: step 1/1. Inhibited by fructose 1,6-bisphosphate (FBP). Functionally, key enzyme in the regulation of glycerol uptake and metabolism. Catalyzes the phosphorylation of glycerol to yield sn-glycerol 3-phosphate. The sequence is that of Glycerol kinase from Burkholderia ambifaria (strain ATCC BAA-244 / DSM 16087 / CCUG 44356 / LMG 19182 / AMMD) (Burkholderia cepacia (strain AMMD)).